The chain runs to 146 residues: Large ribosomal subunit protein uL15 (146 aa).

The span at 1–18 (MKLHELKAAEGTRKERNR) shows a compositional bias: basic and acidic residues. The interval 1–58 (MKLHELKAAEGTRKERNRVGRGMSSGNGKTSGRGHKGQKARSGGGVRPGFEGGQMPLF) is disordered. Residues 42–52 (SGGGVRPGFEG) show a composition bias toward gly residues.

This sequence belongs to the universal ribosomal protein uL15 family. In terms of assembly, part of the 50S ribosomal subunit.

In terms of biological role, binds to the 23S rRNA. This is Large ribosomal subunit protein uL15 from Oceanobacillus iheyensis (strain DSM 14371 / CIP 107618 / JCM 11309 / KCTC 3954 / HTE831).